We begin with the raw amino-acid sequence, 593 residues long: DNA primase (593 aa).

Residues 38–62 (CPFHQEKTPSFTVSDSKRFFYCFGC) form a CHC2-type zinc finger. Positions 250-332 (NRSILVEGYF…EKKISFIRLP (83 aa)) constitute a Toprim domain. Mg(2+) contacts are provided by E256, D300, and D302.

It belongs to the DnaG primase family. Monomer. Interacts with DnaB. The cofactor is Zn(2+). Mg(2+) is required as a cofactor.

It catalyses the reaction ssDNA + n NTP = ssDNA/pppN(pN)n-1 hybrid + (n-1) diphosphate.. RNA polymerase that catalyzes the synthesis of short RNA molecules used as primers for DNA polymerase during DNA replication. The sequence is that of DNA primase from Rickettsia prowazekii (strain Madrid E).